We begin with the raw amino-acid sequence, 86 residues long: Late effector protein 1 (86 aa).

The N-terminal stretch at M1–S24 is a signal peptide.

It belongs to the lep1 family. In terms of assembly, interacts at the cell wall with secreted rep1 repellent peptides.

It localises to the secreted. It is found in the cell wall. Its function is as follows. Core effector contributing to spore formation and tumor formation at the host plant. Modulates surface hydrophobicity promoting cell-cell or cell-surface contacts. Lep1 and rep1 interact in aerial hyphae to form a strong hydrophobic layer. Plays a crucial role in hyphal aggregation that might be a prerequisite for strong proliferation of diploid cells and for induction of the morphological changes associated with spore formation. This is Late effector protein 1 from Mycosarcoma maydis (Corn smut fungus).